Reading from the N-terminus, the 105-residue chain is MKVHKGDTVLVVSGKDKGAKGKVIQAYPTRNKVLVEGVNRIKKHTAVSSNERGASSGGIVTQEAPIHVSNVMVVDSDGNPTRIGYRVDEETGKKVRVSKRNGKDI.

The protein belongs to the universal ribosomal protein uL24 family. In terms of assembly, part of the 50S ribosomal subunit.

Functionally, one of two assembly initiator proteins, it binds directly to the 5'-end of the 23S rRNA, where it nucleates assembly of the 50S subunit. In terms of biological role, one of the proteins that surrounds the polypeptide exit tunnel on the outside of the subunit. This Mycobacterium sp. (strain JLS) protein is Large ribosomal subunit protein uL24.